Here is a 481-residue protein sequence, read N- to C-terminus: GTPase Der (481 aa).

2 EngA-type G domains span residues 3–166 (PVVA…ESDF) and 194–367 (IKLA…MSAT). Residues 9-16 (GRPNVGKS), 56-60 (DTGGI), 118-121 (NKVD), 200-207 (GKPNVGKS), 247-251 (DTAGV), and 312-315 (NKWD) contribute to the GTP site. Residues 368-452 (KRINTALLTQ…PIKIEFREGN (85 aa)) enclose the KH-like domain.

This sequence belongs to the TRAFAC class TrmE-Era-EngA-EngB-Septin-like GTPase superfamily. EngA (Der) GTPase family. In terms of assembly, associates with the 50S ribosomal subunit.

In terms of biological role, GTPase that plays an essential role in the late steps of ribosome biogenesis. The polypeptide is GTPase Der (Alteromonas mediterranea (strain DSM 17117 / CIP 110805 / LMG 28347 / Deep ecotype)).